Reading from the N-terminus, the 164-residue chain is Transcriptional repressor NrdR (164 aa).

Residues 3–34 fold into a zinc finger; sequence CPKCNYHKSSVVDSRQAEDGNTIRRRRECEQC. Positions 49 to 139 constitute an ATP-cone domain; sequence LLVIKKDGTR…VYKSFKDVDE (91 aa).

Belongs to the NrdR family. It depends on Zn(2+) as a cofactor.

Negatively regulates transcription of bacterial ribonucleotide reductase nrd genes and operons by binding to NrdR-boxes. This Streptococcus pyogenes serotype M6 (strain ATCC BAA-946 / MGAS10394) protein is Transcriptional repressor NrdR.